A 363-amino-acid polypeptide reads, in one-letter code: MIIDTTEIETINSFSKLESLKEVYGIIWMLVPIVTLVLGITIGVLVIVWLEREISAGIQQRIGPEYAGPLGILQALADGTKLLLKENLIPSTGDTRLFSIGPSIAVISIFLSYSVIPFGDHLVLADLSIGVFFWIAISSIAPVGLLMSGYGSNNKYSFLGGLRAAAQSISYEIPLALCVLSISLLSNSSSTVDIVEAQSKYGFWGWNLWRQPIGFIVFLISSLAECERLPFDLPEAEEELVAGYQTEYSGIKFGLFYIASYLNLLVSSLFVTVLYLGGWNLSIPYIFVPELFGINKGGKVFGTLIGIFITLAKTYLFLFIPIATRWTLPRLRMDQLLNLGWKFLLPISLGNLLLTTSSQLLSL.

A run of 8 helical transmembrane segments spans residues L30–L50, F98–F118, L127–M147, A165–L185, F203–L223, Y248–S268, V300–I320, and L336–T356.

Belongs to the complex I subunit 1 family. NDH is composed of at least 16 different subunits, 5 of which are encoded in the nucleus.

It is found in the plastid. The protein localises to the chloroplast thylakoid membrane. The enzyme catalyses a plastoquinone + NADH + (n+1) H(+)(in) = a plastoquinol + NAD(+) + n H(+)(out). The catalysed reaction is a plastoquinone + NADPH + (n+1) H(+)(in) = a plastoquinol + NADP(+) + n H(+)(out). Functionally, NDH shuttles electrons from NAD(P)H:plastoquinone, via FMN and iron-sulfur (Fe-S) centers, to quinones in the photosynthetic chain and possibly in a chloroplast respiratory chain. The immediate electron acceptor for the enzyme in this species is believed to be plastoquinone. Couples the redox reaction to proton translocation, and thus conserves the redox energy in a proton gradient. The sequence is that of NAD(P)H-quinone oxidoreductase subunit 1, chloroplastic from Solanum bulbocastanum (Wild potato).